A 224-amino-acid chain; its full sequence is Phosphoribosylformylglycinamidine synthase subunit PurQ (224 aa).

The Glutamine amidotransferase type-1 domain maps to 2–224 (KFAVIQFPGS…SILNHAEVKA (223 aa)). The active-site Nucleophile is Cys86. Residues His195 and Glu197 contribute to the active site.

Part of the FGAM synthase complex composed of 1 PurL, 1 PurQ and 2 PurS subunits.

Its subcellular location is the cytoplasm. It catalyses the reaction N(2)-formyl-N(1)-(5-phospho-beta-D-ribosyl)glycinamide + L-glutamine + ATP + H2O = 2-formamido-N(1)-(5-O-phospho-beta-D-ribosyl)acetamidine + L-glutamate + ADP + phosphate + H(+). It carries out the reaction L-glutamine + H2O = L-glutamate + NH4(+). Its pathway is purine metabolism; IMP biosynthesis via de novo pathway; 5-amino-1-(5-phospho-D-ribosyl)imidazole from N(2)-formyl-N(1)-(5-phospho-D-ribosyl)glycinamide: step 1/2. Functionally, part of the phosphoribosylformylglycinamidine synthase complex involved in the purines biosynthetic pathway. Catalyzes the ATP-dependent conversion of formylglycinamide ribonucleotide (FGAR) and glutamine to yield formylglycinamidine ribonucleotide (FGAM) and glutamate. The FGAM synthase complex is composed of three subunits. PurQ produces an ammonia molecule by converting glutamine to glutamate. PurL transfers the ammonia molecule to FGAR to form FGAM in an ATP-dependent manner. PurS interacts with PurQ and PurL and is thought to assist in the transfer of the ammonia molecule from PurQ to PurL. This is Phosphoribosylformylglycinamidine synthase subunit PurQ from Lactobacillus delbrueckii subsp. bulgaricus (strain ATCC 11842 / DSM 20081 / BCRC 10696 / JCM 1002 / NBRC 13953 / NCIMB 11778 / NCTC 12712 / WDCM 00102 / Lb 14).